Consider the following 223-residue polypeptide: Cytochrome c biogenesis ATP-binding export protein CcmA (223 aa).

Residues 1–223 (MRSLACERDE…KSDMAVGNDY (223 aa)) form the ABC transporter domain. 31-38 (GSNGAGKT) is a binding site for ATP.

Belongs to the ABC transporter superfamily. CcmA exporter (TC 3.A.1.107) family. In terms of assembly, the complex is composed of two ATP-binding proteins (CcmA) and two transmembrane proteins (CcmB).

Its subcellular location is the cell inner membrane. It catalyses the reaction heme b(in) + ATP + H2O = heme b(out) + ADP + phosphate + H(+). Functionally, part of the ABC transporter complex CcmAB involved in the biogenesis of c-type cytochromes; once thought to export heme, this seems not to be the case, but its exact role is uncertain. Responsible for energy coupling to the transport system. This Saccharophagus degradans (strain 2-40 / ATCC 43961 / DSM 17024) protein is Cytochrome c biogenesis ATP-binding export protein CcmA.